Consider the following 453-residue polypeptide: Sensor histidine kinase CpxA (453 aa).

Topologically, residues 1–4 (MTAR) are cytoplasmic. The helical transmembrane segment at 5-25 (IFAIFWLTLALVLMLVLMLPK) threads the bilayer. Over 26–159 (LDSRQMTELL…SDFINLLFDR (134 aa)) the chain is Periplasmic. Residues 160 to 180 (PLLLLIVTMLVSAPLLLWLAW) form a helical membrane-spanning segment. The region spanning 180–233 (WSLAKPARKLKNAADEVAQGNLRQHPELEAGPQEFLAAGASFNQMVTALERMMT) is the HAMP domain. At 181–453 (SLAKPARKLK…TIWLPLYKRT (273 aa)) the chain is on the cytoplasmic side. One can recognise a Histidine kinase domain in the interval 241–451 (DISHELRTPL…RLTIWLPLYK (211 aa)). Histidine 244 serves as the catalytic Nucleophile. Histidine 244 is modified (phosphohistidine; by autocatalysis). Residues 244 to 247 (HELR), 355 to 360 (RNALRY), aspartate 382, 401 to 402 (RT), and 412 to 417 (GTGLGL) contribute to the ATP site.

In terms of assembly, interacts with cognate response regulator CpxR.

It localises to the cell inner membrane. The catalysed reaction is ATP + protein L-histidine = ADP + protein N-phospho-L-histidine.. With respect to regulation, the two-component system is activated by envelope stress such as overexpression of some (misfolded) periplasmic proteins. Its function is as follows. Histidine kinase member of the two-component regulatory system CpxA/CpxR which responds to envelope stress response by activating or, in some cases, repressing expression of downstream genes. Activates CpxR by phosphorylation. This chain is Sensor histidine kinase CpxA, found in Klebsiella pneumoniae subsp. pneumoniae (strain HS11286).